Reading from the N-terminus, the 20-residue chain is MDXKXYVDLKERFLRYVKFN.

Belongs to the peptidase M20B family. It depends on Zn(2+) as a cofactor. Requires Co(2+) as cofactor.

It is found in the cell envelope. It carries out the reaction Release of the N-terminal residue from a tripeptide.. Its activity is regulated as follows. Inhibited by the chelating agents EDTA and 1,10-phenanthroline, by bestatin and amastatin, p-hydroxymercuribenzoate and some divalent cations at high concentration. In terms of biological role, cleaves a wide range of dipeptides and tripeptides, but does not display activity against larger peptides. May have a role in the survival of F.nucleatum in the subgingival environment of the mouth. The polypeptide is Peptidase T (pepT) (Fusobacterium nucleatum subsp. polymorphum (Fusobacterium polymorphum)).